Reading from the N-terminus, the 88-residue chain is MRIYSLLILSFLLLASAVLINSAEMPRSEKSLLYSIMQGREDSEEGRCLGPMDECNVFDDNCCAGWLKCNCDWGFAGNCRCSKTPKEG.

Positions 1–17 are cleaved as a signal peptide; sequence MRIYSLLILSFLLLASA. A propeptide spanning residues 18-47 is cleaved from the precursor; that stretch reads VLINSAEMPRSEKSLLYSIMQGREDSEEGR. Intrachain disulfides connect Cys48/Cys63, Cys55/Cys69, Cys62/Cys81, and Cys71/Cys79.

Belongs to the neurotoxin 07 (Beta/delta-agtx) family. 02 (aga-3) subfamily. As to expression, expressed by the venom gland.

The protein resides in the secreted. Its function is as follows. Weak insecticidal toxin with probable ion channel impairing activity. In vivo, induces paralysis when injected into sheep blowflies (L.cuprina). Shows weak toxicity, since it is only toxic at high doses, and flies recover within 24 hours. This is U18-hexatoxin-Hi1a from Hadronyche infensa (Fraser island funnel-web spider).